Consider the following 72-residue polypeptide: Mitochondrial import receptor subunit TOM7-1 (72 aa).

The Cytoplasmic portion of the chain corresponds to 2–41 (LKPKGKNTKKAAAADEDDGAVAVVGKFVKEWGTWTAKKAK). The helical transmembrane segment at 42 to 59 (VITHYGFIPLVIIIGMNS) threads the bilayer. The Mitochondrial intermembrane segment spans residues 60–72 (EPKPSLSQLLSPV).

The protein belongs to the Tom7 family. Forms part of the preprotein translocase complex of the outer mitochondrial membrane (TOM complex).

The protein localises to the mitochondrion outer membrane. Functionally, seems to act as a modulator of the dynamics of the mitochondrial protein transport machinery. Seems to promote the dissociation of subunits of the outer membrane translocase. The polypeptide is Mitochondrial import receptor subunit TOM7-1 (TOM7-1) (Solanum tuberosum (Potato)).